Here is a 250-residue protein sequence, read N- to C-terminus: Probable transcriptional regulatory protein RER_29220 (250 aa).

Belongs to the TACO1 family.

It is found in the cytoplasm. This Rhodococcus erythropolis (strain PR4 / NBRC 100887) protein is Probable transcriptional regulatory protein RER_29220.